An 84-amino-acid polypeptide reads, in one-letter code: Beta-defensin 119 (84 aa).

The first 21 residues, 1–21 (MKLLYLFLAILLAIEEPVISG), serve as a signal peptide directing secretion. Cystine bridges form between Cys28–Cys55, Cys35–Cys49, and Cys39–Cys56.

The protein belongs to the beta-defensin family.

The protein localises to the secreted. Its function is as follows. Has antibacterial activity. The chain is Beta-defensin 119 (DEFB119) from Hylobates lar (Lar gibbon).